Reading from the N-terminus, the 191-residue chain is MEIKPITTYTGKVVPLFNDNIDTDQIIPKVHLKRISKSGFGPFAFDEWRYLDDGSDNPDFNPNKPEYKDASILITGENFGCGSSREHAAWAIKDYGFDIIIAGSYSDIFYMNCTKNAMLPIVLDKEAREYLADAGEITIDLPNQTVSTKDKSFDFQIDETWKKKLVNGLDDIDITLQFEDAIKNYEAAKTY.

It belongs to the LeuD family. LeuD type 1 subfamily. In terms of assembly, heterodimer of LeuC and LeuD.

The enzyme catalyses (2R,3S)-3-isopropylmalate = (2S)-2-isopropylmalate. Its pathway is amino-acid biosynthesis; L-leucine biosynthesis; L-leucine from 3-methyl-2-oxobutanoate: step 2/4. Catalyzes the isomerization between 2-isopropylmalate and 3-isopropylmalate, via the formation of 2-isopropylmaleate. This is 3-isopropylmalate dehydratase small subunit from Staphylococcus saprophyticus subsp. saprophyticus (strain ATCC 15305 / DSM 20229 / NCIMB 8711 / NCTC 7292 / S-41).